The primary structure comprises 696 residues: Elongation factor G (696 aa).

Residues T10–L290 enclose the tr-type G domain. Residues A19–T26, D89–H93, and N143–D146 contribute to the GTP site.

It belongs to the TRAFAC class translation factor GTPase superfamily. Classic translation factor GTPase family. EF-G/EF-2 subfamily.

The protein localises to the cytoplasm. In terms of biological role, catalyzes the GTP-dependent ribosomal translocation step during translation elongation. During this step, the ribosome changes from the pre-translocational (PRE) to the post-translocational (POST) state as the newly formed A-site-bound peptidyl-tRNA and P-site-bound deacylated tRNA move to the P and E sites, respectively. Catalyzes the coordinated movement of the two tRNA molecules, the mRNA and conformational changes in the ribosome. In Deinococcus geothermalis (strain DSM 11300 / CIP 105573 / AG-3a), this protein is Elongation factor G.